A 176-amino-acid polypeptide reads, in one-letter code: Probable DNA-directed RNA polymerase subunit delta (176 aa).

The region spanning 14-81 (KSFIDMAYTL…GENLWGLRDW (68 aa)) is the HTH HARE-type domain. Residues 114 to 176 (LGEDEMDDDD…DFEDEEDFKA (63 aa)) are disordered. Acidic residues-rich tracts occupy residues 116–145 (EDEMDDDDDIPAQTDDQEELNDPEDEQVEE) and 153–176 (VIEEDEDELDEDEEDFEDEEDFKA).

The protein belongs to the RpoE family. As to quaternary structure, RNAP is composed of a core of 2 alpha, a beta and a beta' subunits. The core is associated with a delta subunit and one of several sigma factors.

Participates in both the initiation and recycling phases of transcription. In the presence of the delta subunit, RNAP displays an increased specificity of transcription, a decreased affinity for nucleic acids, and an increased efficiency of RNA synthesis because of enhanced recycling. This is Probable DNA-directed RNA polymerase subunit delta from Staphylococcus aureus (strain bovine RF122 / ET3-1).